A 320-amino-acid chain; its full sequence is tRNA U34 carboxymethyltransferase (320 aa).

Carboxy-S-adenosyl-L-methionine-binding positions include lysine 89, tryptophan 103, lysine 108, glycine 128, 150–152 (DPT), 179–180 (IE), methionine 194, tyrosine 198, and arginine 313.

Belongs to the class I-like SAM-binding methyltransferase superfamily. CmoB family. Homotetramer.

The catalysed reaction is carboxy-S-adenosyl-L-methionine + 5-hydroxyuridine(34) in tRNA = 5-carboxymethoxyuridine(34) in tRNA + S-adenosyl-L-homocysteine + H(+). Functionally, catalyzes carboxymethyl transfer from carboxy-S-adenosyl-L-methionine (Cx-SAM) to 5-hydroxyuridine (ho5U) to form 5-carboxymethoxyuridine (cmo5U) at position 34 in tRNAs. The protein is tRNA U34 carboxymethyltransferase of Actinobacillus pleuropneumoniae serotype 3 (strain JL03).